The following is a 219-amino-acid chain: Ribose-5-phosphate isomerase A (219 aa).

Substrate is bound by residues 28-31 (TGST), 81-84 (DGAD), and 94-97 (KGGG). E103 serves as the catalytic Proton acceptor. K121 contacts substrate.

This sequence belongs to the ribose 5-phosphate isomerase family. As to quaternary structure, homodimer.

The catalysed reaction is aldehydo-D-ribose 5-phosphate = D-ribulose 5-phosphate. Its pathway is carbohydrate degradation; pentose phosphate pathway; D-ribose 5-phosphate from D-ribulose 5-phosphate (non-oxidative stage): step 1/1. Functionally, catalyzes the reversible conversion of ribose-5-phosphate to ribulose 5-phosphate. In Shigella boydii serotype 18 (strain CDC 3083-94 / BS512), this protein is Ribose-5-phosphate isomerase A.